The sequence spans 157 residues: Phosphopantetheine adenylyltransferase (157 aa).

Threonine 10 contacts substrate. ATP is bound by residues 10–11 (TF) and histidine 18. Substrate is bound by residues lysine 42, leucine 74, and arginine 88. Residues 89–91 (GLR), glutamate 99, and 124–130 (NAFISSS) each bind ATP.

Belongs to the bacterial CoaD family. As to quaternary structure, homohexamer. The cofactor is Mg(2+).

The protein resides in the cytoplasm. The enzyme catalyses (R)-4'-phosphopantetheine + ATP + H(+) = 3'-dephospho-CoA + diphosphate. The protein operates within cofactor biosynthesis; coenzyme A biosynthesis; CoA from (R)-pantothenate: step 4/5. Reversibly transfers an adenylyl group from ATP to 4'-phosphopantetheine, yielding dephospho-CoA (dPCoA) and pyrophosphate. The chain is Phosphopantetheine adenylyltransferase from Helicobacter acinonychis (strain Sheeba).